A 178-amino-acid polypeptide reads, in one-letter code: 2-C-methyl-D-erythritol 2,4-cyclodiphosphate synthase (178 aa).

Residues Asp-24, His-26, and His-61 each contribute to the a divalent metal cation site. 24 to 26 (DSH) serves as a coordination point for 4-CDP-2-C-methyl-D-erythritol 2-phosphate. 150–153 (TSGE) is a binding site for 4-CDP-2-C-methyl-D-erythritol 2-phosphate.

It belongs to the IspF family. Homotrimer. A divalent metal cation is required as a cofactor.

The enzyme catalyses 4-CDP-2-C-methyl-D-erythritol 2-phosphate = 2-C-methyl-D-erythritol 2,4-cyclic diphosphate + CMP. It participates in isoprenoid biosynthesis; isopentenyl diphosphate biosynthesis via DXP pathway; isopentenyl diphosphate from 1-deoxy-D-xylulose 5-phosphate: step 4/6. Its function is as follows. Involved in the biosynthesis of isopentenyl diphosphate (IPP) and dimethylallyl diphosphate (DMAPP), two major building blocks of isoprenoid compounds. Catalyzes the conversion of 4-diphosphocytidyl-2-C-methyl-D-erythritol 2-phosphate (CDP-ME2P) to 2-C-methyl-D-erythritol 2,4-cyclodiphosphate (ME-CPP) with a corresponding release of cytidine 5-monophosphate (CMP). In Chlamydia trachomatis serovar A (strain ATCC VR-571B / DSM 19440 / HAR-13), this protein is 2-C-methyl-D-erythritol 2,4-cyclodiphosphate synthase.